The primary structure comprises 550 residues: Pectinesterase 2.1 (550 aa).

An N-linked (GlcNAc...) asparagine glycan is attached at Asn179. The substrate site is built by Thr312 and Gln342. Residues Cys331 and Cys358 are joined by a disulfide bond. Asp365 functions as the Proton donor in the catalytic mechanism. The Nucleophile role is filled by Asp386. A disulfide bridge connects residues Cys399 and Cys433. Residues Arg454 and Trp456 each contribute to the substrate site.

The protein in the N-terminal section; belongs to the PMEI family. It in the C-terminal section; belongs to the pectinesterase family.

The protein resides in the secreted. It is found in the cell wall. It catalyses the reaction [(1-&gt;4)-alpha-D-galacturonosyl methyl ester](n) + n H2O = [(1-&gt;4)-alpha-D-galacturonosyl](n) + n methanol + n H(+). It functions in the pathway glycan metabolism; pectin degradation; 2-dehydro-3-deoxy-D-gluconate from pectin: step 1/5. Its function is as follows. Pectinesterase may play a role in cell wall metabolism during fruit growth and development prior to ripening and may be required for preparing cell walls for softening by polygalacturonase during fruit ripening. In Solanum lycopersicum (Tomato), this protein is Pectinesterase 2.1 (PME2.1).